A 372-amino-acid chain; its full sequence is Alpha-L-fucosidase 3 (372 aa).

Residues 1–23 form the signal peptide; the sequence is MNPILSSLFALSLLSSLSPSTHA. The active-site Nucleophile is the serine 37. N-linked (GlcNAc...) asparagine glycosylation is found at asparagine 96, asparagine 114, asparagine 139, and asparagine 182. Residues aspartate 345 and histidine 348 contribute to the active site.

This sequence belongs to the 'GDSL' lipolytic enzyme family. In terms of tissue distribution, high expression in younger leaves and in the apical region of the inflorescence stem.

It localises to the secreted. The protein resides in the extracellular space. The protein localises to the apoplast. It catalyses the reaction an alpha-L-fucoside + H2O = L-fucose + an alcohol. In terms of biological role, hydrolyzes alpha-1,2-linked fucose. Also active on fucosylated xyloglucan oligosaccharides. The sequence is that of Alpha-L-fucosidase 3 (FXG1) from Arabidopsis thaliana (Mouse-ear cress).